The chain runs to 638 residues: Probable beta-glucosidase C (638 aa).

A signal peptide spans 1 to 18; the sequence is MKVLAPGYLAEASLTALA. Residues asparagine 40, asparagine 94, asparagine 116, asparagine 223, and asparagine 274 are each glycosylated (N-linked (GlcNAc...) asparagine). Aspartate 341 is a catalytic residue. N-linked (GlcNAc...) asparagine glycans are attached at residues asparagine 364, asparagine 480, asparagine 488, and asparagine 528.

It belongs to the glycosyl hydrolase 3 family.

It localises to the secreted. The enzyme catalyses Hydrolysis of terminal, non-reducing beta-D-glucosyl residues with release of beta-D-glucose.. The protein operates within glycan metabolism; cellulose degradation. Beta-glucosidases are one of a number of cellulolytic enzymes involved in the degradation of cellulosic biomass. Catalyzes the last step releasing glucose from the inhibitory cellobiose. This is Probable beta-glucosidase C (bglC) from Aspergillus oryzae (strain ATCC 42149 / RIB 40) (Yellow koji mold).